Consider the following 409-residue polypeptide: E3 ubiquitin-protein ligase MARCHF4 (409 aa).

A signal peptide spans 1-17; the sequence is MLMPLGGLLWWWCCCCG. Residues 92–133 form a disordered region; sequence GPREAVGRETPPLPPPPPLPPSGDDDWDGPATGPPASLLSSA. Over residues 102 to 112 the composition is skewed to pro residues; that stretch reads PPLPPPPPLPP. The RING-CH-type zinc-finger motif lies at 154 to 214; sequence DSGMRTPLCR…ELCYYKYHVI (61 aa). Zn(2+) contacts are provided by cysteine 162, cysteine 165, cysteine 178, cysteine 180, histidine 188, cysteine 191, cysteine 204, and cysteine 207. Transmembrane regions (helical) follow at residues 242-262 and 271-291; these read LGSL…FSPS and LFQI…GLII. Disordered stretches follow at residues 323–372 and 389–409; these read EDQK…GPVS and PHDQ…VTTV. The span at 328–343 shows a compositional bias: polar residues; it reads GGRTNLQTSSSAQANL.

It localises to the golgi apparatus membrane. The enzyme catalyses S-ubiquitinyl-[E2 ubiquitin-conjugating enzyme]-L-cysteine + [acceptor protein]-L-lysine = [E2 ubiquitin-conjugating enzyme]-L-cysteine + N(6)-ubiquitinyl-[acceptor protein]-L-lysine.. Its pathway is protein modification; protein ubiquitination. In terms of biological role, E3 ubiquitin-protein ligase that may mediate ubiquitination of MHC-I and CD4, and promote their subsequent endocytosis and sorting to lysosomes via multivesicular bodies. E3 ubiquitin ligases accept ubiquitin from an E2 ubiquitin-conjugating enzyme in the form of a thioester and then directly transfer the ubiquitin to targeted substrates. The polypeptide is E3 ubiquitin-protein ligase MARCHF4 (Marchf4) (Mus musculus (Mouse)).